A 303-amino-acid polypeptide reads, in one-letter code: UDP-3-O-acyl-N-acetylglucosamine deacetylase (303 aa).

Zn(2+) is bound by residues H78, H237, and D241. Catalysis depends on H264, which acts as the Proton donor.

It belongs to the LpxC family. Zn(2+) is required as a cofactor.

The catalysed reaction is a UDP-3-O-[(3R)-3-hydroxyacyl]-N-acetyl-alpha-D-glucosamine + H2O = a UDP-3-O-[(3R)-3-hydroxyacyl]-alpha-D-glucosamine + acetate. Its pathway is glycolipid biosynthesis; lipid IV(A) biosynthesis; lipid IV(A) from (3R)-3-hydroxytetradecanoyl-[acyl-carrier-protein] and UDP-N-acetyl-alpha-D-glucosamine: step 2/6. Catalyzes the hydrolysis of UDP-3-O-myristoyl-N-acetylglucosamine to form UDP-3-O-myristoylglucosamine and acetate, the committed step in lipid A biosynthesis. The protein is UDP-3-O-acyl-N-acetylglucosamine deacetylase of Stenotrophomonas maltophilia (strain K279a).